A 109-amino-acid polypeptide reads, in one-letter code: U4-lycotoxin-Ls1a (109 aa).

Residues 1–22 (MKVLVLFSVLFLTLFSYSSTEA) form the signal peptide. Residues 23 to 44 (IDEFDSDAEDDMLSLMANEQVR) constitute a propeptide that is removed on maturation. The interval 45–88 (AKACTPRLHDCSHDRHSCCRGELFKDVCYCFYPEGEDKTEVCSC) is knottin domain. Intrachain disulfides connect cysteine 48–cysteine 63, cysteine 55–cysteine 72, cysteine 62–cysteine 88, and cysteine 74–cysteine 86. The tract at residues 89-108 (QQPKSHKYIEKVVDKAKTVV) is linear cationic cytotoxin domain.

It belongs to the neurotoxin 19 (CSTX) family. 05 (U4-Lctx) subfamily. As to expression, expressed by the venom gland.

Its subcellular location is the secreted. Its function is as follows. Enhances the high-affinity desensitization of human P2RX3 purinoceptors. The protein is U4-lycotoxin-Ls1a of Lycosa singoriensis (Wolf spider).